A 701-amino-acid chain; its full sequence is Polyribonucleotide nucleotidyltransferase (701 aa).

Mg(2+) contacts are provided by Asp-489 and Asp-495. The region spanning 556–615 (PRIHTMKIHPDKIREVIGSGGKVIRSITEETGCAIDIEDDGTIRIASSDQASAEQAVKII) is the KH domain. The S1 motif domain occupies 625–693 (GQVYEGKVVR…RQGRVKLTMK (69 aa)).

The protein belongs to the polyribonucleotide nucleotidyltransferase family. Mg(2+) serves as cofactor.

It is found in the cytoplasm. It catalyses the reaction RNA(n+1) + phosphate = RNA(n) + a ribonucleoside 5'-diphosphate. Functionally, involved in mRNA degradation. Catalyzes the phosphorolysis of single-stranded polyribonucleotides processively in the 3'- to 5'-direction. This is Polyribonucleotide nucleotidyltransferase from Magnetococcus marinus (strain ATCC BAA-1437 / JCM 17883 / MC-1).